The chain runs to 352 residues: Ribosomal RNA large subunit methyltransferase M (352 aa).

Residues S184, 217–220, D236, D256, and D272 each bind S-adenosyl-L-methionine; that span reads APGG. Catalysis depends on K301, which acts as the Proton acceptor.

This sequence belongs to the class I-like SAM-binding methyltransferase superfamily. RNA methyltransferase RlmE family. RlmM subfamily. In terms of assembly, monomer.

The protein localises to the cytoplasm. The catalysed reaction is cytidine(2498) in 23S rRNA + S-adenosyl-L-methionine = 2'-O-methylcytidine(2498) in 23S rRNA + S-adenosyl-L-homocysteine + H(+). Functionally, catalyzes the 2'-O-methylation at nucleotide C2498 in 23S rRNA. The protein is Ribosomal RNA large subunit methyltransferase M of Pseudomonas paraeruginosa (strain DSM 24068 / PA7) (Pseudomonas aeruginosa (strain PA7)).